A 337-amino-acid polypeptide reads, in one-letter code: Nodulation protein D 2 (337 aa).

In terms of domain architecture, HTH lysR-type spans 6-63 (LDLNLLVVLDSLMTARNLTAAARSINLSQPAMSAAVARLRAYFGDELFTMRGRTLVPT). The segment at residues 23-42 (LTAAARSINLSQPAMSAAVA) is a DNA-binding region (H-T-H motif).

It belongs to the LysR transcriptional regulatory family.

Functionally, nodD regulates the expression of the nodABCFE genes which encode other nodulation proteins. NodD is also a negative regulator of its own expression. Binds flavonoids as inducers. The polypeptide is Nodulation protein D 2 (nodD2) (Bradyrhizobium sp. (strain NC92)).